We begin with the raw amino-acid sequence, 544 residues long: Methionine--tRNA ligase (544 aa).

Residues Pro-10–His-20 carry the 'HIGH' region motif. Zn(2+) contacts are provided by Cys-141, Cys-144, Cys-153, and Cys-156. Positions Lys-329–Ser-333 match the 'KMSKS' region motif. Thr-332 contacts ATP.

Belongs to the class-I aminoacyl-tRNA synthetase family. MetG type 1 subfamily. In terms of assembly, monomer. It depends on Zn(2+) as a cofactor.

The protein resides in the cytoplasm. The enzyme catalyses tRNA(Met) + L-methionine + ATP = L-methionyl-tRNA(Met) + AMP + diphosphate. Is required not only for elongation of protein synthesis but also for the initiation of all mRNA translation through initiator tRNA(fMet) aminoacylation. The chain is Methionine--tRNA ligase from Bacillus cereus (strain AH187).